The sequence spans 87 residues: MGGMSITHWIVVAVVVMIFFGKGRFSDMMGDVAKGIKSFKKGMSEDDTTPPAAPPAPAPRLENQPLPPENTTQNVAQNVPNDIKNNQ.

Residues 1 to 21 (MGGMSITHWIVVAVVVMIFFG) form a helical membrane-spanning segment. Residues 40 to 87 (KKGMSEDDTTPPAAPPAPAPRLENQPLPPENTTQNVAQNVPNDIKNNQ) are disordered. A compositionally biased stretch (polar residues) spans 69 to 87 (ENTTQNVAQNVPNDIKNNQ).

It belongs to the TatA/E family. The Tat system comprises two distinct complexes: a TatABC complex, containing multiple copies of TatA, TatB and TatC subunits, and a separate TatA complex, containing only TatA subunits. Substrates initially bind to the TatABC complex, which probably triggers association of the separate TatA complex to form the active translocon.

Its subcellular location is the cell inner membrane. Its function is as follows. Part of the twin-arginine translocation (Tat) system that transports large folded proteins containing a characteristic twin-arginine motif in their signal peptide across membranes. TatA could form the protein-conducting channel of the Tat system. This chain is Sec-independent protein translocase protein TatA, found in Zymomonas mobilis subsp. mobilis (strain ATCC 31821 / ZM4 / CP4).